We begin with the raw amino-acid sequence, 362 residues long: MELGLSLGEAMADAGRELVLGLGMGRREEAAEAGRRDHEVRRELEFGSMSSRCGGSSPEPTVRLTLLPMVPGLGLPWPPPPPPSSESRHLEASTRGFDVNRPPSSGGGGGGGGAEEEQDDVAGAALSSSPNNSAGSFPMDDFSGHGLGGNDAAPGGGGGDRSCSRASDEDDGGSARKKLRLSKEQSAFLEESFKEHSTLNPKQKLALAKQLNLRPRQVEVWFQNRRARTKLKQTEVDCEYLKRCCETLTEENRRLQKELAELRALKTVHPFYMHLPATTLSMCPSCERVASNSAPATASSAATSSTAAPPAAPSSGGIAATSSSAAAAAAPDHRPSSFAALFSSPRGFPLSVAPQAQPPTSS.

Positions 27 to 45 (REEAAEAGRRDHEVRRELE) are enriched in basic and acidic residues. The tract at residues 27 to 179 (REEAAEAGRR…DDGGSARKKL (153 aa)) is disordered. The span at 64-75 (LTLLPMVPGLGL) shows a compositional bias: low complexity. Polar residues predominate over residues 126–135 (LSSSPNNSAG). Residues 145-160 (HGLGGNDAAPGGGGGD) are compositionally biased toward gly residues. Positions 174-233 (SARKKLRLSKEQSAFLEESFKEHSTLNPKQKLALAKQLNLRPRQVEVWFQNRRARTKLKQ) form a DNA-binding region, homeobox. Residues 232 to 276 (KQTEVDCEYLKRCCETLTEENRRLQKELAELRALKTVHPFYMHLP) are leucine-zipper. The segment at 301–330 (AATSSTAAPPAAPSSGGIAATSSSAAAAAA) is disordered.

It belongs to the HD-ZIP homeobox family. Class II subfamily. Expressed in stems, leaf sheaths and blades and panicles.

Its subcellular location is the nucleus. In terms of biological role, probable transcription factor. The chain is Homeobox-leucine zipper protein HOX11 (HOX11) from Oryza sativa subsp. japonica (Rice).